Here is a 486-residue protein sequence, read N- to C-terminus: Glutamyl-tRNA(Gln) amidotransferase subunit A (486 aa).

Lys77 acts as the Charge relay system in catalysis. The disordered stretch occupies residues 130–158 (SGENSSVKPTKNAWDQTKVPGGSSSGSAA). Residues 132–144 (ENSSVKPTKNAWD) are compositionally biased toward polar residues. The active-site Charge relay system is Ser152. Residue Ser176 is the Acyl-ester intermediate of the active site.

Belongs to the amidase family. GatA subfamily. As to quaternary structure, heterotrimer of A, B and C subunits.

It catalyses the reaction L-glutamyl-tRNA(Gln) + L-glutamine + ATP + H2O = L-glutaminyl-tRNA(Gln) + L-glutamate + ADP + phosphate + H(+). In terms of biological role, allows the formation of correctly charged Gln-tRNA(Gln) through the transamidation of misacylated Glu-tRNA(Gln) in organisms which lack glutaminyl-tRNA synthetase. The reaction takes place in the presence of glutamine and ATP through an activated gamma-phospho-Glu-tRNA(Gln). This Lactococcus lactis subsp. lactis (strain IL1403) (Streptococcus lactis) protein is Glutamyl-tRNA(Gln) amidotransferase subunit A (gatA).